The sequence spans 95 residues: Beta-defensin 132 (95 aa).

The signal sequence occupies residues 1 to 22 (MKFLLLVLAALRFLTQVIPASA). 3 disulfide bridges follow: C27-C55, C35-C49, and C39-C56. The segment at 72-95 (GNHWQSRRRNTQRKDKKQQTTVTS) is disordered. Residues 76–87 (QSRRRNTQRKDK) are compositionally biased toward basic residues.

It belongs to the beta-defensin family.

It is found in the secreted. Has antibacterial activity. The chain is Beta-defensin 132 (DEFB132) from Pongo pygmaeus (Bornean orangutan).